Consider the following 1588-residue polypeptide: Ubiquitin carboxyl-terminal hydrolase 54 (1588 aa).

Omega-N-methylarginine is present on Arg12. The USP domain occupies Lys31–Pro352. Cys42 acts as the Nucleophile in catalysis. Zn(2+)-binding residues include His67, Cys69, Cys74, Cys77, His133, Cys145, Cys150, His153, Cys166, Cys169, Cys225, and Cys229. His302 (proton acceptor) is an active-site residue. Composition is skewed to basic and acidic residues over residues Gly382–Gln391 and Ser424–Ala434. Disordered stretches follow at residues Gly382–Arg519, Phe555–His577, and Glu601–Ser624. Ser424 bears the Phosphoserine mark. Residues Thr453–Gly471 show a composition bias toward polar residues. Low complexity predominate over residues Thr499–Lys513. Residues Phe555–Gly572 are compositionally biased toward basic and acidic residues. Over residues Glu601–Ser616 the composition is skewed to low complexity. 2 positions are modified to phosphoserine: Ser613 and Ser616. Residues Glu682 to Gly712 adopt a coiled-coil conformation. Disordered stretches follow at residues Arg801–Thr834, Gln1089–Tyr1182, Ser1221–Arg1242, and Trp1491–Gly1561. The segment covering Gln808–Gln826 has biased composition (low complexity). Over residues Gly1126–Cys1147 the composition is skewed to basic and acidic residues. A Phosphoserine modification is found at Ser1138. The span at Pro1510–Ser1524 shows a compositional bias: polar residues. Basic and acidic residues predominate over residues Arg1536–Arg1547.

This sequence belongs to the peptidase C19 family.

It catalyses the reaction Thiol-dependent hydrolysis of ester, thioester, amide, peptide and isopeptide bonds formed by the C-terminal Gly of ubiquitin (a 76-residue protein attached to proteins as an intracellular targeting signal).. Functionally, deubiquitinase that specifically mediates 'Lys-63'-linked deubiquitination of substrates with a polyubiquitin chain composed of at least 3 ubiquitins. Specifically recognizes ubiquitin chain in position S2 and catalyzes cleavage of polyubiquitin within 'Lys-63'-linked chains. Not able to deubiquitinate substrates with shorter ubiquitin chains. Mediates deubiquitination of PLK4, maintaining PLK4 stability by reducing its ubiquitination-mediated degradation. This Mus musculus (Mouse) protein is Ubiquitin carboxyl-terminal hydrolase 54 (Usp54).